Here is a 193-residue protein sequence, read N- to C-terminus: Probable GTP-binding protein EngB (193 aa).

An EngB-type G domain is found at 24–193; the sequence is NIPEIALAGR…ELKAALAELL (170 aa). GTP contacts are provided by residues 32-39, 59-63, 77-80, 144-147, and 174-176; these read GRSNVGKS, GKTRT, DLPG, TKAD, and FSA. Mg(2+)-binding residues include Ser39 and Thr61.

It belongs to the TRAFAC class TrmE-Era-EngA-EngB-Septin-like GTPase superfamily. EngB GTPase family. Mg(2+) is required as a cofactor.

In terms of biological role, necessary for normal cell division and for the maintenance of normal septation. This Syntrophomonas wolfei subsp. wolfei (strain DSM 2245B / Goettingen) protein is Probable GTP-binding protein EngB.